The following is a 680-amino-acid chain: DNA-directed RNA polymerase subunit beta' (680 aa).

Positions 69, 71, 87, and 90 each coordinate Zn(2+). Mg(2+)-binding residues include Asp-489, Asp-491, and Asp-493.

This sequence belongs to the RNA polymerase beta' chain family. RpoC1 subfamily. In terms of assembly, in plastids the minimal PEP RNA polymerase catalytic core is composed of four subunits: alpha, beta, beta', and beta''. When a (nuclear-encoded) sigma factor is associated with the core the holoenzyme is formed, which can initiate transcription. Mg(2+) serves as cofactor. Requires Zn(2+) as cofactor.

It is found in the plastid. Its subcellular location is the chloroplast. The enzyme catalyses RNA(n) + a ribonucleoside 5'-triphosphate = RNA(n+1) + diphosphate. DNA-dependent RNA polymerase catalyzes the transcription of DNA into RNA using the four ribonucleoside triphosphates as substrates. This Nasturtium officinale (Watercress) protein is DNA-directed RNA polymerase subunit beta'.